We begin with the raw amino-acid sequence, 142 residues long: Transcriptional regulator MraZ (142 aa).

2 SpoVT-AbrB domains span residues 5-47 (THTP…PTET) and 76-119 (ASDT…DATE).

Belongs to the MraZ family. Forms oligomers.

It localises to the cytoplasm. It is found in the nucleoid. This is Transcriptional regulator MraZ from Cutibacterium acnes (strain DSM 16379 / KPA171202) (Propionibacterium acnes).